The chain runs to 347 residues: Eukaryotic translation initiation factor 3 subunit I (347 aa).

5 WD repeats span residues 8 to 49, 51 to 89, 149 to 190, 194 to 233, and 291 to 330; these read GHER…GTLD, HMGSIWSIDSDHTSLYCVTGSADYTIKVWTLMNGQCVQT, THEG…KLVE, VHKDSVSDLQFSPDRTYFITCSRDSNAHIIDIETFKVLKT, and GHFGPLNSIAVSPQGTSYTSGGEEGLVRLHHFEKSYFDFK.

Belongs to the eIF-3 subunit I family. Component of the eukaryotic translation initiation factor 3 (eIF-3) complex.

The protein localises to the cytoplasm. Component of the eukaryotic translation initiation factor 3 (eIF-3) complex, which is involved in protein synthesis of a specialized repertoire of mRNAs and, together with other initiation factors, stimulates binding of mRNA and methionyl-tRNAi to the 40S ribosome. The eIF-3 complex specifically targets and initiates translation of a subset of mRNAs involved in cell proliferation. This chain is Eukaryotic translation initiation factor 3 subunit I, found in Candida glabrata (strain ATCC 2001 / BCRC 20586 / JCM 3761 / NBRC 0622 / NRRL Y-65 / CBS 138) (Yeast).